We begin with the raw amino-acid sequence, 413 residues long: Phosphopentomutase (413 aa).

6 residues coordinate Mn(2+): D11, D306, H311, D347, H348, and H359.

This sequence belongs to the phosphopentomutase family. Mn(2+) serves as cofactor.

It is found in the cytoplasm. The catalysed reaction is 2-deoxy-alpha-D-ribose 1-phosphate = 2-deoxy-D-ribose 5-phosphate. It carries out the reaction alpha-D-ribose 1-phosphate = D-ribose 5-phosphate. The protein operates within carbohydrate degradation; 2-deoxy-D-ribose 1-phosphate degradation; D-glyceraldehyde 3-phosphate and acetaldehyde from 2-deoxy-alpha-D-ribose 1-phosphate: step 1/2. Its function is as follows. Isomerase that catalyzes the conversion of deoxy-ribose 1-phosphate (dRib-1-P) and ribose 1-phosphate (Rib-1-P) to deoxy-ribose 5-phosphate (dRib-5-P) and ribose 5-phosphate (Rib-5-P), respectively. The sequence is that of Phosphopentomutase from Helicobacter pylori (strain ATCC 700392 / 26695) (Campylobacter pylori).